The primary structure comprises 389 residues: GTPase Obg (389 aa).

The Obg domain maps to 1-159 (MKFVDEAKIL…REVLLELMLL (159 aa)). Residues 160 to 333 (ADVGMLGMPN…LCWDIMEFLK (174 aa)) form the OBG-type G domain. Residues 166–173 (GMPNAGKS), 191–195 (FTTLV), 213–216 (DIPG), 283–286 (NKVD), and 314–316 (AAI) each bind GTP. The Mg(2+) site is built by Ser-173 and Thr-193. The segment at 362 to 389 (QLENPDLEDDDEDWDEEDDDGVEFIYQR) is disordered. Positions 364–383 (ENPDLEDDDEDWDEEDDDGV) are enriched in acidic residues.

Belongs to the TRAFAC class OBG-HflX-like GTPase superfamily. OBG GTPase family. As to quaternary structure, monomer. Requires Mg(2+) as cofactor.

It is found in the cytoplasm. Functionally, an essential GTPase which binds GTP, GDP and possibly (p)ppGpp with moderate affinity, with high nucleotide exchange rates and a fairly low GTP hydrolysis rate. Plays a role in control of the cell cycle, stress response, ribosome biogenesis and in those bacteria that undergo differentiation, in morphogenesis control. The polypeptide is GTPase Obg (Proteus mirabilis (strain HI4320)).